The sequence spans 602 residues: uncharacterized protein (602 aa).

Residues N305, N497, and N577 are each glycosylated (N-linked (GlcNAc...) asparagine).

In terms of processing, N-glycosylated.

The protein localises to the vacuole. This is an uncharacterized protein from Saccharomyces cerevisiae (strain ATCC 204508 / S288c) (Baker's yeast).